A 559-amino-acid polypeptide reads, in one-letter code: Dihydroxy-acid dehydratase (559 aa).

D81 provides a ligand contact to Mg(2+). Residue C122 coordinates [2Fe-2S] cluster. D123 and K124 together coordinate Mg(2+). K124 is modified (N6-carboxylysine). C195 serves as a coordination point for [2Fe-2S] cluster. Residue E448 coordinates Mg(2+). Residue S474 is the Proton acceptor of the active site.

Belongs to the IlvD/Edd family. As to quaternary structure, homodimer. It depends on [2Fe-2S] cluster as a cofactor. Requires Mg(2+) as cofactor.

The catalysed reaction is (2R)-2,3-dihydroxy-3-methylbutanoate = 3-methyl-2-oxobutanoate + H2O. The enzyme catalyses (2R,3R)-2,3-dihydroxy-3-methylpentanoate = (S)-3-methyl-2-oxopentanoate + H2O. The protein operates within amino-acid biosynthesis; L-isoleucine biosynthesis; L-isoleucine from 2-oxobutanoate: step 3/4. It participates in amino-acid biosynthesis; L-valine biosynthesis; L-valine from pyruvate: step 3/4. In terms of biological role, functions in the biosynthesis of branched-chain amino acids. Catalyzes the dehydration of (2R,3R)-2,3-dihydroxy-3-methylpentanoate (2,3-dihydroxy-3-methylvalerate) into 2-oxo-3-methylpentanoate (2-oxo-3-methylvalerate) and of (2R)-2,3-dihydroxy-3-methylbutanoate (2,3-dihydroxyisovalerate) into 2-oxo-3-methylbutanoate (2-oxoisovalerate), the penultimate precursor to L-isoleucine and L-valine, respectively. The sequence is that of Dihydroxy-acid dehydratase from Geobacillus kaustophilus (strain HTA426).